A 1017-amino-acid polypeptide reads, in one-letter code: MPVMKGLLAPQNTFLDTIATRFDGTHSNFLLANAQGTRGFPIVYCSDGFCELTGYGRTEVMQKTCSCRFLYGPETSEPALQRLHKALEGHQEHRAEICFYRKDGSAFWCLLDMMPIKNEMGEVVLFLFSFKDITQSGSPGLGPQGGRGDSNHENSLGRRGATWKFRSARRRSRTVLHRLTGHFGRRGQGGMKANNNVFEPKPSVPEYKVASVGGSRCLLLHYSVSKAIWDGLILLATFYVAVTVPYNVCFSGDDDTPITSRHTLVSDIAVEMLFILDIILNFRTTYVSQSGQVISAPRSIGLHYLATWFFIDLIAALPFDLLYIFNITVTSLVHLLKTVRLLRLLRLLQKLERYSQCSAVVLTLLMSVFALLAHWMACIWYVIGRREMEANDPLLWDIGWLHELGKRLEVPYVNGSVGGPSRRSAYIAALYFTLSSLTSVGFGNVCANTDAEKIFSICTMLIGALMHAVVFGNVTAIIQRMYSRRSLYHSRMKDLKDFIRVHRLPRPLKQRMLEYFQTTWAVNSGIDANELLRDFPDELRADIAMHLNREILQLPLFGAASRGCLRALSLHIKTSFCAPGEYLLRRGDALQAHYYVCSGSLEVLRDNMVLAILGKGDLIGADIPEPGQEPGLGADPNFVLKTSADVKALTYCGLQQLSSRGLAEVLRLYPEYGAAFRAGLPRDLTFNLRQGSDTSGLSRFSRSPRLSQPRSESLGSSSDKTLPSITEAESGAEPGGGPRPRRPLLLPNLSPARPRGSLVSLLGEELPPFSALVSSPSLSPSLSPALAGQGHSASPHGPPRCSAAWKPPQLLIPPLGTFGPPDLSPRIVDGIEDSGSTAEAPSFRFSRRPELPRPRSQAPPTGTRPSPELASEAEEVKEKVCRLNQEISRLNQEVSQLSRELRHIMGLLQARLGPPGHPAGSAWTPDPPCPQLRPPCLSPCASRPPPSLQDTTLAEVHCPASVGTMETGTALLDLRPSILPPYPSEPDPLGPSPVPEASPPTPSLLRHSFQSRSDTFH.

The Cytoplasmic portion of the chain corresponds to methionine 1–isoleucine 228. The PAS domain occupies phenylalanine 14–histidine 90. Positions histidine 93–glycine 145 constitute a PAC domain. Positions serine 138–glycine 157 are disordered. A compositionally biased stretch (gly residues) spans proline 139 to glycine 148. A helical membrane pass occupies residues tryptophan 229 to cysteine 249. Residues phenylalanine 250 to threonine 259 lie on the Extracellular side of the membrane. The helical transmembrane segment at serine 260 to leucine 280 threads the bilayer. Residues asparagine 281–leucine 302 lie on the Cytoplasmic side of the membrane. The helical transmembrane segment at histidine 303–tyrosine 323 threads the bilayer. Residues isoleucine 324–leucine 332 are Extracellular-facing. A glycan (N-linked (GlcNAc...) asparagine) is linked at asparagine 326. A helical; Voltage-sensor membrane pass occupies residues valine 333 to arginine 353. The Cytoplasmic segment spans residues tyrosine 354–valine 361. A helical membrane pass occupies residues leucine 362–valine 382. Over isoleucine 383 to isoleucine 427 the chain is Extracellular. N-linked (GlcNAc...) asparagine glycosylation is present at asparagine 414. Residues alanine 428–asparagine 448 constitute an intramembrane region (pore-forming). The Selectivity filter signature appears at serine 439–asparagine 444. The Extracellular portion of the chain corresponds to threonine 449 to tyrosine 482. Asparagine 473 carries an N-linked (GlcNAc...) asparagine glycan. A helical transmembrane segment spans residues serine 483 to arginine 503. Over leucine 504–histidine 1017 the chain is Cytoplasmic. The tract at residues leucine 556–glycine 620 is cNMP-binding domain. Positions glycine 691–serine 724 are enriched in polar residues. Disordered stretches follow at residues glycine 691–leucine 749, leucine 772–alanine 803, proline 821–glutamate 875, and leucine 971–histidine 1017. Residues leucine 772–alanine 787 are compositionally biased toward low complexity. Residues isoleucine 978–proline 1002 show a composition bias toward pro residues. Residues serine 1008–histidine 1017 show a composition bias toward polar residues.

This sequence belongs to the potassium channel family. H (Eag) (TC 1.A.1.20) subfamily. Kv12.3/KCNH4 sub-subfamily. As to quaternary structure, the potassium channel is probably composed of a homo- or heterotetrameric complex of pore-forming alpha subunits that can associate with modulating beta subunits. Detected only in brain, in particular in the telencephalon. Detected in putamen and caudate nucleus, and at lower levels in cerebral cortex, occipital and hippocampus.

The protein localises to the membrane. It catalyses the reaction K(+)(in) = K(+)(out). Functionally, pore-forming (alpha) subunit of a voltage-gated delayed rectifier. Activates at more negative voltages, exhibits fast prepulse-independent activation kinetics and deactivates much more slowly, but shows no inactivation. This Homo sapiens (Human) protein is Voltage-gated delayed rectifier potassium channel KCNH4.